Consider the following 623-residue polypeptide: Serine/threonine-protein kinase nrc-2 (623 aa).

The tract at residues 1–215 (MPSTKNANGE…GLGALPPPIR (215 aa)) is disordered. Basic and acidic residues-rich tracts occupy residues 27 to 36 (SKDHKDRDAH) and 170 to 180 (LSKEPLEESKD). The span at 199–209 (LAAPDADGLGA) shows a compositional bias: low complexity. One can recognise a Protein kinase domain in the interval 242-532 (FDKIKLIGKG…ASDIKTHPFF (291 aa)). ATP contacts are provided by residues 248 to 256 (IGKGDVGKV) and Lys-271. Asp-367 (proton acceptor) is an active-site residue. Residues 569 to 596 (VDISGSRQMGLKGEPLESGMVTPGENAV) form a disordered region.

It belongs to the protein kinase superfamily. Ser/Thr protein kinase family. KIN82 subfamily.

The catalysed reaction is L-seryl-[protein] + ATP = O-phospho-L-seryl-[protein] + ADP + H(+). The enzyme catalyses L-threonyl-[protein] + ATP = O-phospho-L-threonyl-[protein] + ADP + H(+). Its function is as follows. Controls entry of the cell into the asexual developmental program. Required to repress entry into the conidiation program. The chain is Serine/threonine-protein kinase nrc-2 (nrc-2) from Neurospora crassa (strain ATCC 24698 / 74-OR23-1A / CBS 708.71 / DSM 1257 / FGSC 987).